A 362-amino-acid chain; its full sequence is Histidinol-phosphate aminotransferase (362 aa).

Lysine 210 carries the post-translational modification N6-(pyridoxal phosphate)lysine.

It belongs to the class-II pyridoxal-phosphate-dependent aminotransferase family. Histidinol-phosphate aminotransferase subfamily. Homodimer. It depends on pyridoxal 5'-phosphate as a cofactor.

The enzyme catalyses L-histidinol phosphate + 2-oxoglutarate = 3-(imidazol-4-yl)-2-oxopropyl phosphate + L-glutamate. The protein operates within amino-acid biosynthesis; L-histidine biosynthesis; L-histidine from 5-phospho-alpha-D-ribose 1-diphosphate: step 7/9. The polypeptide is Histidinol-phosphate aminotransferase (Rhodopirellula baltica (strain DSM 10527 / NCIMB 13988 / SH1)).